The sequence spans 507 residues: Glucose-6-phosphate 1-dehydrogenase (507 aa).

NADP(+) is bound by residues R57 and K168. H198, K202, E236, and D255 together coordinate substrate. The active-site Proton acceptor is H260. Substrate is bound at residue K356.

This sequence belongs to the glucose-6-phosphate dehydrogenase family.

It carries out the reaction D-glucose 6-phosphate + NADP(+) = 6-phospho-D-glucono-1,5-lactone + NADPH + H(+). The protein operates within carbohydrate degradation; pentose phosphate pathway; D-ribulose 5-phosphate from D-glucose 6-phosphate (oxidative stage): step 1/3. Its function is as follows. Catalyzes the oxidation of glucose 6-phosphate to 6-phosphogluconolactone. The polypeptide is Glucose-6-phosphate 1-dehydrogenase (Chlamydia muridarum (strain MoPn / Nigg)).